A 134-amino-acid chain; its full sequence is ATP synthase epsilon chain (134 aa).

Belongs to the ATPase epsilon chain family. In terms of assembly, F-type ATPases have 2 components, CF(1) - the catalytic core - and CF(0) - the membrane proton channel. CF(1) has five subunits: alpha(3), beta(3), gamma(1), delta(1), epsilon(1). CF(0) has three main subunits: a, b and c.

The protein resides in the cell inner membrane. In terms of biological role, produces ATP from ADP in the presence of a proton gradient across the membrane. The chain is ATP synthase epsilon chain from Sinorhizobium medicae (strain WSM419) (Ensifer medicae).